Reading from the N-terminus, the 257-residue chain is THAP domain-containing protein 10 (257 aa).

The segment at 1 to 90 adopts a THAP-type zinc-finger fold; sequence MPARCVAAHC…LVAGAVPTLH (90 aa). A compositionally biased stretch (polar residues) spans 154–168; that stretch reads QPHADNPSNTVTSVP. Positions 154–178 are disordered; that stretch reads QPHADNPSNTVTSVPTHCEEGPVHK.

This chain is THAP domain-containing protein 10 (THAP10), found in Homo sapiens (Human).